The chain runs to 282 residues: tRNA (guanine-N(7)-)-methyltransferase (282 aa).

The tract at residues 1 to 36 (MAGPPNKKQKREDYRTARENGEESKELPKKKFYRQR) is disordered. The span at 10-29 (KREDYRTARENGEESKELPK) shows a compositional bias: basic and acidic residues. S-adenosyl-L-methionine contacts are provided by residues Gly-100, 123–124 (EI), 158–159 (NT), and Cys-178. Residue Asp-181 is part of the active site. 256–258 (TEE) lines the S-adenosyl-L-methionine pocket.

It belongs to the class I-like SAM-binding methyltransferase superfamily. TrmB family. As to quaternary structure, forms a complex with trm82.

The protein resides in the nucleus. It carries out the reaction guanosine(46) in tRNA + S-adenosyl-L-methionine = N(7)-methylguanosine(46) in tRNA + S-adenosyl-L-homocysteine. The protein operates within tRNA modification; N(7)-methylguanine-tRNA biosynthesis. In terms of biological role, catalyzes the formation of N(7)-methylguanine at position 46 (m7G46) in tRNA. The protein is tRNA (guanine-N(7)-)-methyltransferase (trm8) of Botryotinia fuckeliana (strain B05.10) (Noble rot fungus).